A 109-amino-acid chain; its full sequence is Tyrosine-protein phosphatase 4 (109 aa).

Residues 1-109 (SKSASIVMLT…QNSGNHPIVI (109 aa)) enclose the Tyrosine-protein phosphatase domain. Glu-78 is a binding site for substrate.

This sequence belongs to the protein-tyrosine phosphatase family.

It catalyses the reaction O-phospho-L-tyrosyl-[protein] + H2O = L-tyrosyl-[protein] + phosphate. The chain is Tyrosine-protein phosphatase 4 (STY-4) from Styela plicata (Wrinkled sea squirt).